We begin with the raw amino-acid sequence, 369 residues long: 4-hydroxy-3-methylbut-2-en-1-yl diphosphate synthase (flavodoxin) (369 aa).

[4Fe-4S] cluster contacts are provided by Cys-268, Cys-271, Cys-303, and Glu-310.

It belongs to the IspG family. [4Fe-4S] cluster serves as cofactor.

The catalysed reaction is (2E)-4-hydroxy-3-methylbut-2-enyl diphosphate + oxidized [flavodoxin] + H2O + 2 H(+) = 2-C-methyl-D-erythritol 2,4-cyclic diphosphate + reduced [flavodoxin]. Its pathway is isoprenoid biosynthesis; isopentenyl diphosphate biosynthesis via DXP pathway; isopentenyl diphosphate from 1-deoxy-D-xylulose 5-phosphate: step 5/6. Functionally, converts 2C-methyl-D-erythritol 2,4-cyclodiphosphate (ME-2,4cPP) into 1-hydroxy-2-methyl-2-(E)-butenyl 4-diphosphate. The protein is 4-hydroxy-3-methylbut-2-en-1-yl diphosphate synthase (flavodoxin) of Exiguobacterium sibiricum (strain DSM 17290 / CCUG 55495 / CIP 109462 / JCM 13490 / 255-15).